Reading from the N-terminus, the 260-residue chain is CD27 antigen (260 aa).

Residues 1–19 (MARPHPWWLCVLGTLVGLS) form the signal peptide. The Extracellular portion of the chain corresponds to 20-191 (ATPAPKSCPE…RSLCSSDFIR (172 aa)). TNFR-Cys repeat units lie at residues 26–63 (SCPE…AQCD), 64–104 (PCIP…NAEC), and 105–141 (ACRN…PHPQ). 8 cysteine pairs are disulfide-bonded: Cys27–Cys39, Cys40–Cys53, Cys43–Cys62, Cys65–Cys81, Cys84–Cys96, Cys87–Cys104, Cys106–Cys120, and Cys112–Cys117. Asn95 is a glycosylation site (N-linked (GlcNAc...) asparagine). Ser127 is a glycosylation site (O-linked (GalNAc...) serine). Residues 192 to 212 (ILVIFSGMFLVFTLAGALFLH) form a helical membrane-spanning segment. At 213–260 (QRRKYRSNKGESPVEPAEPCHYSCPREEEGSTIPIQEDYRKPEPACSP) the chain is on the cytoplasmic side. The residue at position 219 (Ser219) is a Phosphoserine. The disordered stretch occupies residues 219 to 260 (SNKGESPVEPAEPCHYSCPREEEGSTIPIQEDYRKPEPACSP). The segment covering 249–260 (EDYRKPEPACSP) has biased composition (basic and acidic residues).

Homodimer. Interacts with SIVA1; may play a role in apoptosis through association with SIVA1. Interacts with TRAF2. Interacts ith PTPN6. Post-translationally, phosphorylated. In terms of processing, N-glycosylated. O-glycosylated with core 1 or possibly core 8 glycans. In terms of tissue distribution, found in most T-lymphocytes.

Its subcellular location is the cell membrane. Its function is as follows. Costimulatory immune-checkpoint receptor expressed at the surface of T-cells, NK-cells and B-cells which binds to and is activated by its ligand CD70/CD27L expressed by B-cells. The CD70-CD27 signaling pathway mediates antigen-specific T-cell activation and expansion which in turn provides immune surveillance of B-cells. Mechanistically, CD70 ligation activates the TRAF2-PTPN6 axis that subsequently inhibits LCK phosphorylation to promote phenotypic and transcriptional adaptations of T-cell memory. In addition, activation by CD70 on early progenitor cells provides a negative feedback signal to leukocyte differentiation during immune activation and thus modulates hematopoiesis. Negatively regulates the function of Th2 lymphocytes in the adipose tissue. The sequence is that of CD27 antigen from Homo sapiens (Human).